The sequence spans 396 residues: Ribosomal RNA large subunit methyltransferase I (396 aa).

Residues 2–79 (SVFIYLVKGR…KEETVDLDFF (78 aa)) enclose the PUA domain.

The protein belongs to the methyltransferase superfamily. RlmI family.

Its subcellular location is the cytoplasm. It carries out the reaction cytidine(1962) in 23S rRNA + S-adenosyl-L-methionine = 5-methylcytidine(1962) in 23S rRNA + S-adenosyl-L-homocysteine + H(+). Functionally, specifically methylates the cytosine at position 1962 (m5C1962) of 23S rRNA. In Aeromonas salmonicida (strain A449), this protein is Ribosomal RNA large subunit methyltransferase I.